The chain runs to 563 residues: MTKTVEMVITGAQVLNVYTREFEATSLWIDHGRIISNLRDEPYIAAQHVDATGQWIVPGMIDAHVHMESSMVAPSELGKVLLQHGVTTIATDPHELANVAGIAGIQYLIDDARQTPLDVCFMLPSSVPCVPFDDNGATLHAADLRPLYQQSEVRGLAEVMDYGAVARGDTDTLAKISDAYAYGYHADGHAAGLNAHQLNVMRNAGLDTDHECMTVAEAQDRVRAGMAVFLREGTVERDVLPTIGAVTEANASRFAFCTDDKMISDLLTEGSIDYNVRLAMQSGMRPELAYTLASLNGAMAHRLSDRGSLSAGQLADLVVLDDLEHVRIARTMKRGQWILPSTTKPLPFTATRVQHHAQLADFQLPLATGLANVIGVQPNHIETDHLTLPIDATQNFEADCQRDILKMVVIERHHNTGKVGVGLVHGFALKQGAIAGTVAHDAHNIVAVGTSDAAILRAVAQITQDNGGIAVVDNEQVLATMPLAIGGLLSAASYQKVAEQLAELKRAYEVISERPLSFDPFITLSFLTLPVIPTLKLTARGLFDYATFDFIPVAIQDNQRQTV.

The protein belongs to the metallo-dependent hydrolases superfamily. Adenine deaminase family. Requires Mn(2+) as cofactor.

The catalysed reaction is adenine + H2O + H(+) = hypoxanthine + NH4(+). This Lactiplantibacillus plantarum (strain ATCC BAA-793 / NCIMB 8826 / WCFS1) (Lactobacillus plantarum) protein is Adenine deaminase.